Reading from the N-terminus, the 631-residue chain is UvrABC system protein C (631 aa).

The segment at 1 to 20 is disordered; it reads MKNETEAVADQPPKTGPVKP. The region spanning 34–112 is the GIY-YIG domain; that stretch reads MSPGVYRMLD…IKQLKPKFNV (79 aa). The 36-residue stretch at 222–257 folds into the UVR domain; the sequence is TDLQRQLADGMAAASEAMEFERAAALRDRIRALTNV.

This sequence belongs to the UvrC family. In terms of assembly, interacts with UvrB in an incision complex.

The protein resides in the cytoplasm. In terms of biological role, the UvrABC repair system catalyzes the recognition and processing of DNA lesions. UvrC both incises the 5' and 3' sides of the lesion. The N-terminal half is responsible for the 3' incision and the C-terminal half is responsible for the 5' incision. The sequence is that of UvrABC system protein C from Jannaschia sp. (strain CCS1).